The following is a 167-amino-acid chain: Bacterial non-heme ferritin (167 aa).

Residues 1 to 145 (MLSKEVVKLL…GIVDKIKLIG (145 aa)) form the Ferritin-like diiron domain. Residues Glu17, Glu50, His53, Glu94, and Gln127 each contribute to the Fe cation site.

Belongs to the ferritin family. Prokaryotic subfamily. Homooligomer of 24 subunits that assemble into a spherical protein shell (12 +/- 1 nM diameter) that can sequester at least 2000 iron atoms.

The protein localises to the cytoplasm. It catalyses the reaction 4 Fe(2+) + O2 + 6 H2O = 4 iron(III) oxide-hydroxide + 12 H(+). Its function is as follows. Iron-storage protein. In Campylobacter jejuni subsp. jejuni serotype O:2 (strain ATCC 700819 / NCTC 11168), this protein is Bacterial non-heme ferritin (ftn).